The sequence spans 93 residues: DNA-directed RNA polymerase subunit omega (93 aa).

This sequence belongs to the RNA polymerase subunit omega family. The RNAP catalytic core consists of 2 alpha, 1 beta, 1 beta' and 1 omega subunit. When a sigma factor is associated with the core the holoenzyme is formed, which can initiate transcription.

It carries out the reaction RNA(n) + a ribonucleoside 5'-triphosphate = RNA(n+1) + diphosphate. Its function is as follows. Promotes RNA polymerase assembly. Latches the N- and C-terminal regions of the beta' subunit thereby facilitating its interaction with the beta and alpha subunits. The sequence is that of DNA-directed RNA polymerase subunit omega from Actinobacillus pleuropneumoniae serotype 3 (strain JL03).